The following is a 179-amino-acid chain: Translation initiation factor IF-3 (179 aa).

This sequence belongs to the IF-3 family. Monomer.

The protein localises to the cytoplasm. Functionally, IF-3 binds to the 30S ribosomal subunit and shifts the equilibrium between 70S ribosomes and their 50S and 30S subunits in favor of the free subunits, thus enhancing the availability of 30S subunits on which protein synthesis initiation begins. The polypeptide is Translation initiation factor IF-3 (Lactococcus lactis subsp. lactis (strain IL1403) (Streptococcus lactis)).